A 237-amino-acid polypeptide reads, in one-letter code: Purine nucleoside phosphorylase DeoD-type (237 aa).

H4 is an a purine D-ribonucleoside binding site. Phosphate contacts are provided by residues G20, R24, R43, and 87 to 90 (RVGT). Residues 179–181 (EME) and 203–204 (SD) each bind a purine D-ribonucleoside. D204 serves as the catalytic Proton donor.

The protein belongs to the PNP/UDP phosphorylase family. Homohexamer; trimer of homodimers.

It catalyses the reaction a purine D-ribonucleoside + phosphate = a purine nucleobase + alpha-D-ribose 1-phosphate. It carries out the reaction a purine 2'-deoxy-D-ribonucleoside + phosphate = a purine nucleobase + 2-deoxy-alpha-D-ribose 1-phosphate. In terms of biological role, catalyzes the reversible phosphorolytic breakdown of the N-glycosidic bond in the beta-(deoxy)ribonucleoside molecules, with the formation of the corresponding free purine bases and pentose-1-phosphate. This is Purine nucleoside phosphorylase DeoD-type from Streptococcus pyogenes serotype M12 (strain MGAS2096).